Reading from the N-terminus, the 143-residue chain is Transcriptional regulator MraZ (143 aa).

2 SpoVT-AbrB domains span residues 5-47 (EFDH…TLEE) and 76-119 (AVEV…DRET).

Belongs to the MraZ family. Forms oligomers.

The protein resides in the cytoplasm. It is found in the nucleoid. In Staphylococcus epidermidis (strain ATCC 35984 / DSM 28319 / BCRC 17069 / CCUG 31568 / BM 3577 / RP62A), this protein is Transcriptional regulator MraZ.